A 215-amino-acid polypeptide reads, in one-letter code: Pyridoxine/pyridoxamine 5'-phosphate oxidase (215 aa).

Substrate is bound by residues 9 to 12 (RRDY) and Lys-69. FMN is bound by residues 64 to 69 (RVLLLK), 79 to 80 (FT), Lys-86, and Gln-108. Substrate contacts are provided by Tyr-126, Arg-130, and Ser-134. FMN contacts are provided by residues 143–144 (QS) and Trp-188. 194–196 (RLH) contacts substrate. Arg-198 serves as a coordination point for FMN.

The protein belongs to the pyridoxamine 5'-phosphate oxidase family. As to quaternary structure, homodimer. The cofactor is FMN.

The enzyme catalyses pyridoxamine 5'-phosphate + O2 + H2O = pyridoxal 5'-phosphate + H2O2 + NH4(+). The catalysed reaction is pyridoxine 5'-phosphate + O2 = pyridoxal 5'-phosphate + H2O2. It functions in the pathway cofactor metabolism; pyridoxal 5'-phosphate salvage; pyridoxal 5'-phosphate from pyridoxamine 5'-phosphate: step 1/1. It participates in cofactor metabolism; pyridoxal 5'-phosphate salvage; pyridoxal 5'-phosphate from pyridoxine 5'-phosphate: step 1/1. In terms of biological role, catalyzes the oxidation of either pyridoxine 5'-phosphate (PNP) or pyridoxamine 5'-phosphate (PMP) into pyridoxal 5'-phosphate (PLP). The chain is Pyridoxine/pyridoxamine 5'-phosphate oxidase from Pseudomonas entomophila (strain L48).